Reading from the N-terminus, the 362-residue chain is Chorismate synthase (362 aa).

Positions 48 and 54 each coordinate NADP(+). FMN-binding positions include R125–S127, N241–A242, G286, K301–S305, and R327.

This sequence belongs to the chorismate synthase family. In terms of assembly, homotetramer. The cofactor is FMNH2.

The catalysed reaction is 5-O-(1-carboxyvinyl)-3-phosphoshikimate = chorismate + phosphate. Its pathway is metabolic intermediate biosynthesis; chorismate biosynthesis; chorismate from D-erythrose 4-phosphate and phosphoenolpyruvate: step 7/7. Functionally, catalyzes the anti-1,4-elimination of the C-3 phosphate and the C-6 proR hydrogen from 5-enolpyruvylshikimate-3-phosphate (EPSP) to yield chorismate, which is the branch point compound that serves as the starting substrate for the three terminal pathways of aromatic amino acid biosynthesis. This reaction introduces a second double bond into the aromatic ring system. This Paramagnetospirillum magneticum (strain ATCC 700264 / AMB-1) (Magnetospirillum magneticum) protein is Chorismate synthase.